Here is a 145-residue protein sequence, read N- to C-terminus: Maximins 3/H11 type 3 (145 aa).

Residues 1-18 (MNFKYIVAVSFLIASAYA) form the signal peptide. 2 consecutive propeptides follow at residues 19–43 (RSVQ…LREI) and 75–122 (TAEE…TKKE). An Isoleucine amide modification is found at isoleucine 144.

The protein belongs to the bombinin family. As to expression, expressed by the skin glands.

The protein resides in the secreted. Maximin-3 shows antibacterial activity against both Gram-positive and Gram-negative bacteria. It also shows antimicrobial activity against the fungus C.albicans, but not against A.flavus nor P.uticale. It has little hemolytic activity. It possess a significant cytotoxicity against tumor cell lines. It possess a significant anti-HIV activity. It shows high spermicidal activity. Its function is as follows. Maximin-H11 shows antimicrobial activity against bacteria and against the fungus C.albicans. Shows strong hemolytic activity. The protein is Maximins 3/H11 type 3 of Bombina maxima (Giant fire-bellied toad).